The chain runs to 222 residues: 7-cyano-7-deazaguanine synthase (222 aa).

8-18 contributes to the ATP binding site; sequence LSGGMDSTTLA. Residues Cys-188, Cys-196, Cys-199, and Cys-202 each contribute to the Zn(2+) site.

It belongs to the QueC family. Zn(2+) serves as cofactor.

It carries out the reaction 7-carboxy-7-deazaguanine + NH4(+) + ATP = 7-cyano-7-deazaguanine + ADP + phosphate + H2O + H(+). Its pathway is purine metabolism; 7-cyano-7-deazaguanine biosynthesis. In terms of biological role, catalyzes the ATP-dependent conversion of 7-carboxy-7-deazaguanine (CDG) to 7-cyano-7-deazaguanine (preQ(0)). This Methanoculleus marisnigri (strain ATCC 35101 / DSM 1498 / JR1) protein is 7-cyano-7-deazaguanine synthase.